Here is a 198-residue protein sequence, read N- to C-terminus: Transcriptional regulator GfcR (198 aa).

It belongs to the purine/pyrimidine phosphoribosyltransferase family. GfcR subfamily.

This chain is Transcriptional regulator GfcR, found in Methanosphaera stadtmanae (strain ATCC 43021 / DSM 3091 / JCM 11832 / MCB-3).